The following is a 154-amino-acid chain: Myoglobin (154 aa).

The Globin domain maps to G2 to K148. A Phosphoserine modification is found at S4. H65 contacts nitrite. O2 is bound at residue H65. At T68 the chain carries Phosphothreonine. Position 94 (H94) interacts with heme b.

Belongs to the globin family. Monomeric.

The protein localises to the cytoplasm. The protein resides in the sarcoplasm. The enzyme catalyses Fe(III)-heme b-[protein] + nitric oxide + H2O = Fe(II)-heme b-[protein] + nitrite + 2 H(+). It catalyses the reaction H2O2 + AH2 = A + 2 H2O. Monomeric heme protein which primary function is to store oxygen and facilitate its diffusion within muscle tissues. Reversibly binds oxygen through a pentacoordinated heme iron and enables its timely and efficient release as needed during periods of heightened demand. Depending on the oxidative conditions of tissues and cells, and in addition to its ability to bind oxygen, it also has a nitrite reductase activity whereby it regulates the production of bioactive nitric oxide. Under stress conditions, like hypoxia and anoxia, it also protects cells against reactive oxygen species thanks to its pseudoperoxidase activity. In Nycticebus coucang (Slow loris), this protein is Myoglobin (MB).